The primary structure comprises 94 residues: MNIKPLGDRVVIKALPMEEKTKSGIIMPDTAKEKPQEGEVVAVGPGKMEKGERIVLDVKVGDRVIYSKYAGTEVKYDGQEYLILKETDILAVIG.

This sequence belongs to the GroES chaperonin family. As to quaternary structure, heptamer of 7 subunits arranged in a ring. Interacts with the chaperonin GroEL.

The protein resides in the cytoplasm. Its function is as follows. Together with the chaperonin GroEL, plays an essential role in assisting protein folding. The GroEL-GroES system forms a nano-cage that allows encapsulation of the non-native substrate proteins and provides a physical environment optimized to promote and accelerate protein folding. GroES binds to the apical surface of the GroEL ring, thereby capping the opening of the GroEL channel. In Desulfitobacterium hafniense (strain DSM 10664 / DCB-2), this protein is Co-chaperonin GroES.